A 375-amino-acid polypeptide reads, in one-letter code: Homoserine O-succinyltransferase (375 aa).

The 311-residue stretch at 48–358 (NAVLVCHALS…DAGHDSFLLD (311 aa)) folds into the AB hydrolase-1 domain. Serine 154 (nucleophile) is an active-site residue. Arginine 224 is a substrate binding site. Catalysis depends on residues aspartate 319 and histidine 352. Aspartate 353 lines the substrate pocket.

This sequence belongs to the AB hydrolase superfamily. MetX family. Homodimer.

The protein resides in the cytoplasm. The catalysed reaction is L-homoserine + succinyl-CoA = O-succinyl-L-homoserine + CoA. It functions in the pathway amino-acid biosynthesis; L-methionine biosynthesis via de novo pathway; O-succinyl-L-homoserine from L-homoserine: step 1/1. In terms of biological role, transfers a succinyl group from succinyl-CoA to L-homoserine, forming succinyl-L-homoserine. The chain is Homoserine O-succinyltransferase from Aromatoleum aromaticum (strain DSM 19018 / LMG 30748 / EbN1) (Azoarcus sp. (strain EbN1)).